Here is a 487-residue protein sequence, read N- to C-terminus: Solute carrier family 22 member 15-like (487 aa).

Residues 22–42 (AFLTLLQVYVACQSMLIVLVG) form a helical membrane-spanning segment. Asparagine 70 is a glycosylation site (N-linked (GlcNAc...) asparagine). Helical transmembrane passes span 90–110 (LASS…GPLS), 117–137 (PVYL…ALAP), 141–161 (VFAV…LVSF), 178–198 (SLTN…GFYI), 203–223 (TLAF…FLLP), 286–306 (ILLM…TLNA), 315–335 (LNVA…LYFI), 345–365 (ATAG…FLPE), 374–394 (TVLA…VYIY), 406–426 (AGLG…PFIP), and 435–455 (MPFV…LLLP).

This sequence belongs to the major facilitator (TC 2.A.1) superfamily. Organic cation transporter (TC 2.A.1.19) family.

The protein localises to the membrane. Functionally, probably transports organic cations. The sequence is that of Solute carrier family 22 member 15-like (slc22a15b) from Xenopus tropicalis (Western clawed frog).